The chain runs to 688 residues: Probable glucan endo-1,3-beta-glucosidase btgC (688 aa).

Disordered regions lie at residues 1-91, 126-148, and 168-195; these read MSGP…NLGP, ANIP…PEPP, and GQLT…IPYQ. The Cytoplasmic portion of the chain corresponds to 1–307; sequence MSGPNRTYSF…PKPGGGNKKR (307 aa). Residues 175 to 188 are compositionally biased toward polar residues; sequence SVSHLSSTNPSQRN. The helical; Signal-anchor for type II membrane protein transmembrane segment at 308–328 threads the bilayer; sequence GWIVGAILAFIIIGAIVGGAV. Over 329 to 688 the chain is Extracellular; sequence GGTIGHRGNE…IPDCGGKTAT (360 aa). Residues 334-363 form a disordered region; it reads HRGNEEPSSASSASSSSTQTATEDTSVNGD. Residues 341 to 355 are compositionally biased toward low complexity; sequence SSASSASSSSTQTAT. 3 N-linked (GlcNAc...) asparagine glycosylation sites follow: Asn-408, Asn-431, and Asn-459. The Proton donor role is filled by Glu-491. Catalysis depends on Glu-590, which acts as the Nucleophile. Asn-609 and Asn-635 each carry an N-linked (GlcNAc...) asparagine glycan.

Belongs to the glycosyl hydrolase 17 family.

The protein localises to the cell membrane. The catalysed reaction is Hydrolysis of (1-&gt;3)-beta-D-glucosidic linkages in (1-&gt;3)-beta-D-glucans.. In terms of biological role, glucanases play a role in cell expansion during growth, in cell-cell fusion during mating, and in spore release during sporulation. This enzyme may be involved in beta-glucan degradation. Active on laminarin and lichenan. The polypeptide is Probable glucan endo-1,3-beta-glucosidase btgC (btgC) (Aspergillus fumigatus (strain ATCC MYA-4609 / CBS 101355 / FGSC A1100 / Af293) (Neosartorya fumigata)).